A 179-amino-acid chain; its full sequence is Probable chemoreceptor glutamine deamidase CheD 2 (179 aa).

Belongs to the CheD family.

The enzyme catalyses L-glutaminyl-[protein] + H2O = L-glutamyl-[protein] + NH4(+). In terms of biological role, probably deamidates glutamine residues to glutamate on methyl-accepting chemotaxis receptors (MCPs), playing an important role in chemotaxis. This Ruegeria sp. (strain TM1040) (Silicibacter sp.) protein is Probable chemoreceptor glutamine deamidase CheD 2.